The chain runs to 289 residues: Ribosomal RNA small subunit methyltransferase A (289 aa).

S-adenosyl-L-methionine is bound by residues asparagine 21, leucine 23, glycine 48, glutamate 69, aspartate 94, and asparagine 120.

The protein belongs to the class I-like SAM-binding methyltransferase superfamily. rRNA adenine N(6)-methyltransferase family. RsmA subfamily.

Its subcellular location is the cytoplasm. It catalyses the reaction adenosine(1518)/adenosine(1519) in 16S rRNA + 4 S-adenosyl-L-methionine = N(6)-dimethyladenosine(1518)/N(6)-dimethyladenosine(1519) in 16S rRNA + 4 S-adenosyl-L-homocysteine + 4 H(+). In terms of biological role, specifically dimethylates two adjacent adenosines (A1518 and A1519) in the loop of a conserved hairpin near the 3'-end of 16S rRNA in the 30S particle. May play a critical role in biogenesis of 30S subunits. The protein is Ribosomal RNA small subunit methyltransferase A of Actinobacillus pleuropneumoniae serotype 7 (strain AP76).